A 214-amino-acid polypeptide reads, in one-letter code: tRNA (guanine-N(7)-)-methyltransferase (214 aa).

Glu43, Glu68, Asp95, and Asp117 together coordinate S-adenosyl-L-methionine. Residue Asp117 is part of the active site. Substrate contacts are provided by residues Lys121, Asp153, and 190 to 193 (TEYE).

This sequence belongs to the class I-like SAM-binding methyltransferase superfamily. TrmB family.

The enzyme catalyses guanosine(46) in tRNA + S-adenosyl-L-methionine = N(7)-methylguanosine(46) in tRNA + S-adenosyl-L-homocysteine. It participates in tRNA modification; N(7)-methylguanine-tRNA biosynthesis. Catalyzes the formation of N(7)-methylguanine at position 46 (m7G46) in tRNA. This is tRNA (guanine-N(7)-)-methyltransferase from Staphylococcus aureus (strain Mu3 / ATCC 700698).